The chain runs to 187 residues: Elongation factor P (187 aa).

Belongs to the elongation factor P family.

The protein resides in the cytoplasm. Its pathway is protein biosynthesis; polypeptide chain elongation. Its function is as follows. Involved in peptide bond synthesis. Stimulates efficient translation and peptide-bond synthesis on native or reconstituted 70S ribosomes in vitro. Probably functions indirectly by altering the affinity of the ribosome for aminoacyl-tRNA, thus increasing their reactivity as acceptors for peptidyl transferase. The protein is Elongation factor P of Mycobacteroides abscessus (strain ATCC 19977 / DSM 44196 / CCUG 20993 / CIP 104536 / JCM 13569 / NCTC 13031 / TMC 1543 / L948) (Mycobacterium abscessus).